Consider the following 271-residue polypeptide: Phosphate import ATP-binding protein PstB (271 aa).

The region spanning M24–I266 is the ABC transporter domain. Position 56-63 (G56–S63) interacts with ATP.

This sequence belongs to the ABC transporter superfamily. Phosphate importer (TC 3.A.1.7) family. In terms of assembly, the complex is composed of two ATP-binding proteins (PstB), two transmembrane proteins (PstC and PstA) and a solute-binding protein (PstS).

It localises to the cell inner membrane. The catalysed reaction is phosphate(out) + ATP + H2O = ADP + 2 phosphate(in) + H(+). In terms of biological role, part of the ABC transporter complex PstSACB involved in phosphate import. Responsible for energy coupling to the transport system. The polypeptide is Phosphate import ATP-binding protein PstB (Rhizobium etli (strain ATCC 51251 / DSM 11541 / JCM 21823 / NBRC 15573 / CFN 42)).